Here is a 156-residue protein sequence, read N- to C-terminus: SsrA-binding protein (156 aa).

This sequence belongs to the SmpB family.

It localises to the cytoplasm. Required for rescue of stalled ribosomes mediated by trans-translation. Binds to transfer-messenger RNA (tmRNA), required for stable association of tmRNA with ribosomes. tmRNA and SmpB together mimic tRNA shape, replacing the anticodon stem-loop with SmpB. tmRNA is encoded by the ssrA gene; the 2 termini fold to resemble tRNA(Ala) and it encodes a 'tag peptide', a short internal open reading frame. During trans-translation Ala-aminoacylated tmRNA acts like a tRNA, entering the A-site of stalled ribosomes, displacing the stalled mRNA. The ribosome then switches to translate the ORF on the tmRNA; the nascent peptide is terminated with the 'tag peptide' encoded by the tmRNA and targeted for degradation. The ribosome is freed to recommence translation, which seems to be the essential function of trans-translation. This Trichodesmium erythraeum (strain IMS101) protein is SsrA-binding protein.